We begin with the raw amino-acid sequence, 124 residues long: Transcription initiation factor IIA subunit 2 (124 aa).

Belongs to the TFIIA subunit 2 family. In terms of assembly, TFIIA is a heterodimer composed of the large TOA1 and the small TOA2 subunits.

The protein resides in the nucleus. TFIIA is a component of the transcription machinery of RNA polymerase II and plays an important role in transcriptional activation. TFIIA in a complex with tbp mediates transcriptional activity. In Cryptococcus neoformans var. neoformans serotype D (strain JEC21 / ATCC MYA-565) (Filobasidiella neoformans), this protein is Transcription initiation factor IIA subunit 2 (TOA2).